A 2076-amino-acid polypeptide reads, in one-letter code: Protein Ycf2 (2076 aa).

Position 1458-1465 (1458-1465) interacts with ATP; sequence GSIGTGRS.

The protein belongs to the Ycf2 family.

It is found in the plastid. The protein resides in the chloroplast stroma. Functionally, probable ATPase of unknown function. Its presence in a non-photosynthetic plant (Epifagus virginiana) and experiments in tobacco indicate that it has an essential function which is probably not related to photosynthesis. This is Protein Ycf2 from Acorus calamus (Sweet flag).